The sequence spans 1082 residues: Sodium/potassium exporting P-type ATPase 2 (1082 aa).

At 1 to 75 the chain is on the cytoplasmic side; that stretch reads MSSINTNVAE…GANTLGDGDK (75 aa). The chain crosses the membrane as a helical span at residues 76–96; sequence ISLTKIIAHQVCNAMILVLII. Over 97-98 the chain is Extracellular; sequence SM. The helical transmembrane segment at 99–119 threads the bilayer; the sequence is VIALAIKDWISGGVIGFVVLI. At 120-308 the chain is on the cytoplasmic side; that stretch reads NISVGFVQEY…VGTPLQRKLS (189 aa). The chain crosses the membrane as a helical span at residues 309–329; that stretch reads WLAIFLFWGCRYFCNYCNGIP. Topologically, residues 330–336 are extracellular; the sequence is KNRVNKE. A helical transmembrane segment spans residues 337–357; the sequence is VAIYAICVALSMIPSALIVVL. Residues 358–807 are Cytoplasmic-facing; sequence TITMAVGAQV…RMSSNIQKFV (450 aa). The active-site 4-aspartylphosphate intermediate is Asp-393. 2 residues coordinate Mg(2+): Asp-393 and Thr-395. Residues Thr-395, Glu-499, Lys-552, Arg-604, Thr-664, Gly-665, Asp-666, Arg-723, and Lys-729 each contribute to the ATP site. Asp-748 is a Mg(2+) binding site. Asn-751 is an ATP binding site. A helical membrane pass occupies residues 808–828; that stretch reads LQLLAENVAQALYLMVGLAFI. Over 829-832 the chain is Extracellular; the sequence is DDSG. A helical membrane pass occupies residues 833–853; it reads LSVFPLSPVEVLWILVVTSCF. Residues 854–884 lie on the Cytoplasmic side of the membrane; sequence PAMDLGQERASDDILEESPNSTIFTWEVIID. A helical transmembrane segment spans residues 885–905; the sequence is MIVYGFWMAVCCLVCFVIIVY. The Extracellular portion of the chain corresponds to 906–935; that stretch reads GEGDPYLGVNCNKSSSSNSDVCELVFRGRS. Residues 936-956 form a helical membrane-spanning segment; that stretch reads ASFATMTWCALILAWECIHPY. Residues 957–983 lie on the Cytoplasmic side of the membrane; sequence NSLFYMRQDTDHPWWKQTVIDLWDNQF. A helical membrane pass occupies residues 984-1004; sequence LFWSVAIGFISVFPVVYIPVI. Over 1005 to 1007 the chain is Extracellular; it reads NTK. The chain crosses the membrane as a helical span at residues 1008 to 1028; it reads VFLHGPIGYEWGLAVGFSILF. The Cytoplasmic segment spans residues 1029-1082; it reads LAGSELWKWIKRIHKRKANKKAKNPEYELERSDPFKKYASFSRSNTMDRPELMV.

This sequence belongs to the cation transport ATPase (P-type) (TC 3.A.3) family. Type IID subfamily. Mg(2+) serves as cofactor. In terms of processing, the active site is phosphorylated in presence of sodium or potassium and in conditions of higher pH. Not phosphorylated in presence of calcium ions.

It is found in the cell membrane. It catalyses the reaction Na(+)(in) + ATP + H2O = Na(+)(out) + ADP + phosphate + H(+). The enzyme catalyses K(+)(in) + ATP + H2O = K(+)(out) + ADP + phosphate + H(+). Catalyzes the hydrolysis of ATP coupled with the export of sodium and potassium from the cell. May be an inefficient sodium exporter. May transport other cations such as lithium. Sodium/potassium efflux ATPases are involved in salt tolerance and maintaining the membrane potential across the plasma membrane in high salinity (Na+) or alkaline (K+) environments. This Schwanniomyces occidentalis (Yeast) protein is Sodium/potassium exporting P-type ATPase 2.